The following is a 158-amino-acid chain: 2-C-methyl-D-erythritol 2,4-cyclodiphosphate synthase (158 aa).

2 residues coordinate a divalent metal cation: Asp-9 and His-11. Residues 9–11 and 35–36 contribute to the 4-CDP-2-C-methyl-D-erythritol 2-phosphate site; these read DVH and HS. An a divalent metal cation-binding site is contributed by His-43. Residues 57-59, 62-66, 101-107, 133-136, Phe-140, and Arg-143 each bind 4-CDP-2-C-methyl-D-erythritol 2-phosphate; these read DIG, FPDTD, AQKPKMA, and TTTE.

The protein belongs to the IspF family. As to quaternary structure, homotrimer. Requires a divalent metal cation as cofactor.

It catalyses the reaction 4-CDP-2-C-methyl-D-erythritol 2-phosphate = 2-C-methyl-D-erythritol 2,4-cyclic diphosphate + CMP. Its pathway is isoprenoid biosynthesis; isopentenyl diphosphate biosynthesis via DXP pathway; isopentenyl diphosphate from 1-deoxy-D-xylulose 5-phosphate: step 4/6. Its function is as follows. Involved in the biosynthesis of isopentenyl diphosphate (IPP) and dimethylallyl diphosphate (DMAPP), two major building blocks of isoprenoid compounds. Catalyzes the conversion of 4-diphosphocytidyl-2-C-methyl-D-erythritol 2-phosphate (CDP-ME2P) to 2-C-methyl-D-erythritol 2,4-cyclodiphosphate (ME-CPP) with a corresponding release of cytidine 5-monophosphate (CMP). The polypeptide is 2-C-methyl-D-erythritol 2,4-cyclodiphosphate synthase (Bacillus pumilus (strain SAFR-032)).